A 300-amino-acid chain; its full sequence is tRNA dimethylallyltransferase (300 aa).

11–18 (GPTAVGKS) contacts ATP. 13 to 18 (TAVGKS) lines the substrate pocket. The interaction with substrate tRNA stretch occupies residues 35 to 38 (DSIQ).

The protein belongs to the IPP transferase family. As to quaternary structure, monomer. Requires Mg(2+) as cofactor.

It catalyses the reaction adenosine(37) in tRNA + dimethylallyl diphosphate = N(6)-dimethylallyladenosine(37) in tRNA + diphosphate. Its function is as follows. Catalyzes the transfer of a dimethylallyl group onto the adenine at position 37 in tRNAs that read codons beginning with uridine, leading to the formation of N6-(dimethylallyl)adenosine (i(6)A). The polypeptide is tRNA dimethylallyltransferase (Borrelia turicatae (strain 91E135)).